Reading from the N-terminus, the 128-residue chain is Large ribosomal subunit protein uL22 (128 aa).

Positions 1 to 22 (MARGHRSQIKRERNANKDTRPS) are disordered. Residues 9-21 (IKRERNANKDTRP) show a composition bias toward basic and acidic residues.

The protein belongs to the universal ribosomal protein uL22 family. Part of the 50S ribosomal subunit.

This protein binds specifically to 23S rRNA; its binding is stimulated by other ribosomal proteins, e.g. L4, L17, and L20. It is important during the early stages of 50S assembly. It makes multiple contacts with different domains of the 23S rRNA in the assembled 50S subunit and ribosome. Functionally, the globular domain of the protein is located near the polypeptide exit tunnel on the outside of the subunit, while an extended beta-hairpin is found that lines the wall of the exit tunnel in the center of the 70S ribosome. The chain is Large ribosomal subunit protein uL22 from Lachnoclostridium phytofermentans (strain ATCC 700394 / DSM 18823 / ISDg) (Clostridium phytofermentans).